A 570-amino-acid chain; its full sequence is Endo-1,4-beta-xylanase 5-like (570 aa).

The N-terminal stretch at 1 to 23 is a signal peptide; the sequence is MNSIKNGFFLCMIFLLWCHVDSG. Asn197, Asn261, and Asn307 each carry an N-linked (GlcNAc...) asparagine glycan. In terms of domain architecture, GH10 spans 202-501; that stretch reads KGVVISLKQT…TQTGDVIDKL (300 aa). Glu332 serves as the catalytic Proton donor. A glycan (N-linked (GlcNAc...) asparagine) is linked at Asn346. Residue Glu439 is the Nucleophile of the active site. N-linked (GlcNAc...) asparagine glycosylation is found at Asn490, Asn515, Asn537, and Asn545.

This sequence belongs to the glycosyl hydrolase 10 (cellulase F) family.

It catalyses the reaction Endohydrolysis of (1-&gt;4)-beta-D-xylosidic linkages in xylans.. Its pathway is glycan degradation; xylan degradation. In terms of biological role, binds to and hydrolyzes insoluble and soluble xylan substrates. This chain is Endo-1,4-beta-xylanase 5-like, found in Arabidopsis thaliana (Mouse-ear cress).